The chain runs to 890 residues: Alanine--tRNA ligase (890 aa).

Zn(2+)-binding residues include histidine 568, histidine 572, cysteine 680, and histidine 684.

The protein belongs to the class-II aminoacyl-tRNA synthetase family. Zn(2+) serves as cofactor.

It localises to the cytoplasm. It carries out the reaction tRNA(Ala) + L-alanine + ATP = L-alanyl-tRNA(Ala) + AMP + diphosphate. Catalyzes the attachment of alanine to tRNA(Ala) in a two-step reaction: alanine is first activated by ATP to form Ala-AMP and then transferred to the acceptor end of tRNA(Ala). Also edits incorrectly charged Ser-tRNA(Ala) and Gly-tRNA(Ala) via its editing domain. This is Alanine--tRNA ligase from Psychrobacter cryohalolentis (strain ATCC BAA-1226 / DSM 17306 / VKM B-2378 / K5).